We begin with the raw amino-acid sequence, 182 residues long: ATP synthase subunit delta (182 aa).

This sequence belongs to the ATPase delta chain family. In terms of assembly, F-type ATPases have 2 components, F(1) - the catalytic core - and F(0) - the membrane proton channel. F(1) has five subunits: alpha(3), beta(3), gamma(1), delta(1), epsilon(1). CF(0) has four main subunits: a(1), b(1), b'(1) and c(10-14). The alpha and beta chains form an alternating ring which encloses part of the gamma chain. F(1) is attached to F(0) by a central stalk formed by the gamma and epsilon chains, while a peripheral stalk is formed by the delta, b and b' chains.

Its subcellular location is the cellular thylakoid membrane. In terms of biological role, f(1)F(0) ATP synthase produces ATP from ADP in the presence of a proton or sodium gradient. F-type ATPases consist of two structural domains, F(1) containing the extramembraneous catalytic core and F(0) containing the membrane proton channel, linked together by a central stalk and a peripheral stalk. During catalysis, ATP synthesis in the catalytic domain of F(1) is coupled via a rotary mechanism of the central stalk subunits to proton translocation. This protein is part of the stalk that links CF(0) to CF(1). It either transmits conformational changes from CF(0) to CF(1) or is implicated in proton conduction. The protein is ATP synthase subunit delta of Prochlorococcus marinus (strain NATL1A).